The following is a 397-amino-acid chain: UDP-GlcNAc:betaGal beta-1,3-N-acetylglucosaminyltransferase 8 (397 aa).

Over 1–6 (MRCPKC) the chain is Cytoplasmic. A helical; Signal-anchor for type II membrane protein transmembrane segment spans residues 7–23 (LLCLSALLTLLGLKVYI). Topologically, residues 24–397 (EWTSESRLSK…KQLQDPRLQC (374 aa)) are lumenal. Positions 33-58 (KAYPSPRGTPPSPTPANPEPTLPANL) are disordered. Pro residues predominate over residues 39 to 53 (RGTPPSPTPANPEPT). The N-linked (GlcNAc...) asparagine glycan is linked to asparagine 57.

Belongs to the glycosyltransferase 31 family. Interacts with B3GNT2; this interaction greatly increases B3GNT2 catalytic activity, independently of B3GNT8 enzymatic activity. As to expression, highly expressed in small intestine, pancreas, spleen, bone marrow, lung, throat, and ileum, and weakly in fetal brain, cerebellum, heart, liver, tongue, breast, uteri, and testis. Not detected in colon. Differentially expressed in human tumor cell lines.

The protein localises to the golgi apparatus membrane. Its pathway is protein modification; protein glycosylation. Beta-1,3-N-acetylglucosaminyltransferase that plays a role in the elongation of specific branch structures of multiantennary N-glycans. Has strong activity towards tetraantennary N-glycans and 2,6 triantennary glycans. The sequence is that of UDP-GlcNAc:betaGal beta-1,3-N-acetylglucosaminyltransferase 8 from Homo sapiens (Human).